A 330-amino-acid chain; its full sequence is Fructose-1,6-bisphosphatase class 1 (330 aa).

4 residues coordinate Mg(2+): E78, D97, L99, and D100. Residues 100–103 and N188 contribute to the substrate site; that span reads DGSS. A Mg(2+)-binding site is contributed by E260.

The protein belongs to the FBPase class 1 family. As to quaternary structure, homotetramer. The cofactor is Mg(2+).

It is found in the cytoplasm. The enzyme catalyses beta-D-fructose 1,6-bisphosphate + H2O = beta-D-fructose 6-phosphate + phosphate. The protein operates within carbohydrate biosynthesis; gluconeogenesis. The chain is Fructose-1,6-bisphosphatase class 1 from Paracoccus denitrificans (strain Pd 1222).